The chain runs to 230 residues: 2,3-bisphosphoglycerate-dependent phosphoglycerate mutase (230 aa).

Substrate-binding positions include 8-15, 21-22, arginine 60, 87-90, lysine 98, 114-115, and 183-184; these read RHGESEWN, TG, ERHY, RR, and GN. Catalysis depends on histidine 9, which acts as the Tele-phosphohistidine intermediate. The active-site Proton donor/acceptor is glutamate 87.

Belongs to the phosphoglycerate mutase family. BPG-dependent PGAM subfamily.

It carries out the reaction (2R)-2-phosphoglycerate = (2R)-3-phosphoglycerate. It functions in the pathway carbohydrate degradation; glycolysis; pyruvate from D-glyceraldehyde 3-phosphate: step 3/5. Functionally, catalyzes the interconversion of 2-phosphoglycerate and 3-phosphoglycerate. The sequence is that of 2,3-bisphosphoglycerate-dependent phosphoglycerate mutase from Streptococcus pneumoniae (strain P1031).